The chain runs to 94 residues: Conotoxin Cal22a (94 aa).

Residues 1–24 (MMSTKGITLFLCLLLLALATSVNG) form the signal peptide. The propeptide occupies 25 to 44 (GQGTRRSRMTRALHGGRPSA).

Contains 4 disulfide bonds. As to expression, expressed by the venom duct.

It localises to the secreted. Functionally, probable neurotoxin with unknown target. Possibly targets ion channels. The polypeptide is Conotoxin Cal22a (Californiconus californicus (California cone)).